We begin with the raw amino-acid sequence, 378 residues long: Sterol 24-C-methyltransferase erg6 (378 aa).

The protein belongs to the class I-like SAM-binding methyltransferase superfamily. Erg6/SMT family.

It localises to the nucleus. Its subcellular location is the endoplasmic reticulum. The enzyme catalyses zymosterol + S-adenosyl-L-methionine = fecosterol + S-adenosyl-L-homocysteine + H(+). It carries out the reaction lanosterol + S-adenosyl-L-methionine = eburicol + S-adenosyl-L-homocysteine + H(+). It participates in steroid metabolism; ergosterol biosynthesis. Functionally, sterol 24-C-methyltransferase; part of the third module of ergosterol biosynthesis pathway that includes by the late steps of the pathway. Erg6 catalyzes the methyl transfer from S-adenosyl-methionine to the C-24 of zymosterol to form fecosterol. The third module or late pathway involves the ergosterol synthesis itself through consecutive reactions that mainly occur in the endoplasmic reticulum (ER) membrane. Firstly, the squalene synthase erg9 catalyzes the condensation of 2 farnesyl pyrophosphate moieties to form squalene, which is the precursor of all steroids. Secondly, squalene is converted into lanosterol by the consecutive action of the squalene epoxidase erg1 and the lanosterol synthase erg7. The lanosterol 14-alpha-demethylase erg11/cyp1 catalyzes C14-demethylation of lanosterol to produce 4,4'-dimethyl cholesta-8,14,24-triene-3-beta-ol. In the next steps, a complex process involving various demethylation, reduction and desaturation reactions catalyzed by the C-14 reductase erg24 and the C-4 demethylation complex erg25-erg26-erg27 leads to the production of zymosterol. Erg28 likely functions in the C-4 demethylation complex reaction by tethering erg26 and Erg27 to the endoplasmic reticulum or to facilitate interaction between these proteins. Then, the sterol 24-C-methyltransferase erg6 catalyzes the methyl transfer from S-adenosyl-methionine to the C-24 of zymosterol to form fecosterol. The C-8 sterol isomerase erg2 catalyzes the reaction which results in unsaturation at C-7 in the B ring of sterols and thus converts fecosterol to episterol. The sterol-C5-desaturases erg31 and erg32 then catalyze the introduction of a C-5 double bond in the B ring to produce 5-dehydroepisterol. The C-22 sterol desaturase erg5 further converts 5-dehydroepisterol into ergosta-5,7,22,24(28)-tetraen-3beta-ol by forming the C-22(23) double bond in the sterol side chain. Finally, ergosta-5,7,22,24(28)-tetraen-3beta-ol is substrate of the C-24(28) sterol reductase erg4 to produce ergosterol. In the genus Schizosaccharomyces, a second route exists between lanosterol and fecosterol, via the methylation of lanosterol to eburicol by erg6, followed by C14-demethylation by erg11/cyp1 and C4-demethylation by the demethylation complex erg25-erg26-erg27. The chain is Sterol 24-C-methyltransferase erg6 from Schizosaccharomyces pombe (strain 972 / ATCC 24843) (Fission yeast).